The primary structure comprises 349 residues: Anthranilate phosphoribosyltransferase (349 aa).

5-phospho-alpha-D-ribose 1-diphosphate is bound by residues Gly82, 85–86, 92–95, 110–118, and Ser122; these read GD, NVST, and KHGNRGVSS. Gly82 lines the anthranilate pocket. Ser94 contributes to the Mg(2+) binding site. Asn113 is a binding site for anthranilate. Anthranilate is bound at residue Arg168. The Mg(2+) site is built by Asp227 and Glu228.

Belongs to the anthranilate phosphoribosyltransferase family. Homodimer. Mg(2+) serves as cofactor.

The enzyme catalyses N-(5-phospho-beta-D-ribosyl)anthranilate + diphosphate = 5-phospho-alpha-D-ribose 1-diphosphate + anthranilate. Its pathway is amino-acid biosynthesis; L-tryptophan biosynthesis; L-tryptophan from chorismate: step 2/5. Catalyzes the transfer of the phosphoribosyl group of 5-phosphorylribose-1-pyrophosphate (PRPP) to anthranilate to yield N-(5'-phosphoribosyl)-anthranilate (PRA). This is Anthranilate phosphoribosyltransferase from Acinetobacter baumannii (strain ATCC 17978 / DSM 105126 / CIP 53.77 / LMG 1025 / NCDC KC755 / 5377).